We begin with the raw amino-acid sequence, 142 residues long: Hemoglobin subunit theta-1 (142 aa).

The 141-residue stretch at 2 to 142 (ALSAEDRALV…VISALASEYR (141 aa)) folds into the Globin domain. Residues H59 and H88 each coordinate heme b.

The protein belongs to the globin family.

This chain is Hemoglobin subunit theta-1 (HBQ1), found in Pongo pygmaeus (Bornean orangutan).